Consider the following 1107-residue polypeptide: Ubiquitin-associated protein 2-like (1107 aa).

The residue at position 1 (methionine 1) is an N-acetylmethionine. Residues 1–33 form a disordered region; it reads MMTSVGTNRARGNWEQPQNQNQTQHKQRPQATA. One can recognise a UBA domain in the interval 49-89; sequence DFEEKVKQLIDITGKNQDECVIALHDCNGDVNRAINVLLEG. Residues 92–229 are disordered; that stretch reads DTHSWEMVGK…NTWNNTGHFE (138 aa). Basic and acidic residues predominate over residues 118–132; the sequence is EEGKENRDRDRDYSR. Over residues 133–145 the composition is skewed to basic residues; it reads RRGGPPRRGRGAS. Residues arginine 187 and arginine 190 each carry the asymmetric dimethylarginine modification. A compositionally biased stretch (low complexity) spans 213–226; the sequence is NYGNSSGNTWNNTG. Residues serine 376, serine 380, and serine 436 each carry the phosphoserine modification. Threonine 445 is modified (phosphothreonine). 3 disordered regions span residues 461–513, 550–676, and 689–814; these read AVAT…KKTS, SDYE…IPSL, and ANQH…LPPG. Phosphoserine occurs at positions 474, 487, 490, 491, and 497. Composition is skewed to low complexity over residues 494–505 and 554–589; these read QSSSPQPAQQKL and STPT…SQES. A compositionally biased stretch (polar residues) spans 590 to 656; it reads GYQSGPIQST…TQLQTTQSVE (67 aa). Residues serine 624, serine 625, serine 628, and serine 629 each carry the phosphoserine modification. Residues 665 to 675 show a composition bias toward low complexity; sequence SESPSTSSIPS. The span at 689–713 shows a compositional bias: polar residues; sequence ANQHSSSLSGLSHTEEIPNTTTTQH. Residues 714–804 show a composition bias toward low complexity; sequence SSALSTQQNT…STRSSVATTS (91 aa). Residues serine 872 and serine 879 each carry the phosphoserine modification. Disordered stretches follow at residues 885–921 and 1060–1107; these read FGRG…LNPA and QQPH…WGAN. Low complexity-rich tracts occupy residues 893-916 and 1073-1087; these read PAPA…TQQT and QDGQ…QTSS. Residues 1088–1107 show a composition bias toward polar residues; sequence IPQKPQTNKSAYNSYSWGAN.

As to quaternary structure, interacts with BMI1. Part of a complex consisting of UBAP2L, BMI1 and RNF2. Interacts with G3BP1 (via NTF2 domain); promoting stress granule formation.

The protein resides in the nucleus. Its subcellular location is the chromosome. It is found in the cytoplasm. It localises to the stress granule. In terms of biological role, recruits the ubiquitination machinery to RNA polymerase II for polyubiquitination, removal and degradation, when the transcription-coupled nucleotide excision repair (TC-NER) machinery fails to resolve DNA damage. Plays an important role in the activity of long-term repopulating hematopoietic stem cells (LT-HSCs). Is a regulator of stress granule assembly, required for their efficient formation. Required for proper brain development and neocortex lamination. The polypeptide is Ubiquitin-associated protein 2-like (Mus musculus (Mouse)).